Reading from the N-terminus, the 504-residue chain is MEEFQGYLELDRFRQHDFLYPLIFREYIXXXAHDHGLNRVILLENLAYDNKSSLLIVKRLITRMYQQNHLMISANDSNQNRFLGYNKNLYSQMISEGFSIIAEIPYSLRLISSLEGAQIIRSYNLRSIHSIFPFLEDKFPHLNYVADVLIPYPIHLEILVQTLRYRVKDASSLHLLRFFLHEYSNGNILFILNKSISIFSKSNSRLLLFLYNSYICEYESLFLFLRNQSSHLRLTSSGVLFERIYLHRKMGDLAEVFVNDFRGILCFLKDPFIHYVRYQGKSILSSKDTPLLMNKWKYYLVSLWQCHFYVWSHPGRIYINQLSKHSLDFLGYFSNVPLNPSMVPSQMLENSFVINNAPKKLDTIVPIIPLIGSLAKAKFCNALGHPISKPTWADLSDFDIINRFVRICKNLSHYYSGSSKKKGMYRIKYILRLSCVKTLARKHKSTIRAFLKRLGSELFEEFFTEEEEFLSLIFPRTSFTLRRLYRGRVWYLDIICMNGLANHE.

This sequence belongs to the intron maturase 2 family. MatK subfamily.

The protein resides in the plastid. The protein localises to the chloroplast. Its function is as follows. Usually encoded in the trnK tRNA gene intron. Probably assists in splicing its own and other chloroplast group II introns. The protein is Maturase K of Carpinus betulus (European hornbeam).